A 535-amino-acid polypeptide reads, in one-letter code: Glucan 1,6-alpha-glucosidase (535 aa).

D194 functions as the Nucleophile in the catalytic mechanism. E236 serves as the catalytic Proton donor.

This sequence belongs to the glycosyl hydrolase 13 family.

Its subcellular location is the cytoplasm. It carries out the reaction Hydrolysis of (1-&gt;6)-alpha-D-glucosidic linkages in (1-&gt;6)-alpha-D-glucans and derived oligosaccharides.. Functionally, the physiological substrates may be short isomaltosaccharides. The polypeptide is Glucan 1,6-alpha-glucosidase (dexB) (Streptococcus pneumoniae serotype 4 (strain ATCC BAA-334 / TIGR4)).